Consider the following 496-residue polypeptide: UDP-N-acetylmuramate--L-alanine ligase (496 aa).

Position 122–128 (122–128 (GTHGKTT)) interacts with ATP.

It belongs to the MurCDEF family.

The protein resides in the cytoplasm. It carries out the reaction UDP-N-acetyl-alpha-D-muramate + L-alanine + ATP = UDP-N-acetyl-alpha-D-muramoyl-L-alanine + ADP + phosphate + H(+). Its pathway is cell wall biogenesis; peptidoglycan biosynthesis. In terms of biological role, cell wall formation. The sequence is that of UDP-N-acetylmuramate--L-alanine ligase from Mycolicibacterium paratuberculosis (strain ATCC BAA-968 / K-10) (Mycobacterium paratuberculosis).